Reading from the N-terminus, the 73-residue chain is Large ribosomal subunit protein bL31 (73 aa).

Residues cysteine 16, cysteine 18, cysteine 38, and cysteine 41 each contribute to the Zn(2+) site.

The protein belongs to the bacterial ribosomal protein bL31 family. Type A subfamily. In terms of assembly, part of the 50S ribosomal subunit. Requires Zn(2+) as cofactor.

In terms of biological role, binds the 23S rRNA. This Vibrio parahaemolyticus serotype O3:K6 (strain RIMD 2210633) protein is Large ribosomal subunit protein bL31.